We begin with the raw amino-acid sequence, 509 residues long: MTNTIVISCLHNMAAILYCGQIQKLVVANAHYQVSDIYLGCVDKIFSGINAAFINLGKNEYSGFIHISDTGPLKKKYYVNNITNILTIRQKILVQIIKEPTLNKGPRLTANITLSGRYIVLMPFSQSICISRKIYDEDERHYLKSLAILIKPATMGLLFRPSAVGVDEEIILSELKNLKEQWNFVQKSAINSYSPVLLYKDEDIVKKVIRDFYNNNTNNIVIDSNLGLKQLNYYIHTWHCNNSSTVPKIKLYSNNQCILDAFGINQAISRALIPKVDLILGGYMFIETLEAFTIIDVNSGSFNNSTSARETVLKTNCSAATEIAYQLQIRNITGVIIIDFIDMESQRDQLQLLEHFNKELSLDDAKPQIVQLSELGLVELTRRRQGKSLYELISSDSNYFYFFTQSERSQSLKRFDDRQQKQQIFNKSWLSAEINTINKVFFQKSNLCRPANFYLIRNLYIVKSSITYKQNYLLTHRSKLIYSKEYSKVLPSSYYLASLNKNSNQEFLS.

One can recognise an S1 motif domain in the interval Ser35–Arg117. The Mg(2+) site is built by Asp296 and Asp339.

It belongs to the RNase E/G family. Mg(2+) serves as cofactor.

It is found in the plastid. It localises to the chloroplast stroma. Functionally, involved in intercistronic processing of primary transcripts from chloroplast operons. The endonucleolytic activity of the enzyme depends on the number of phosphates at the 5' end, is inhibited by structured RNA, and preferentially cleaves A/U-rich sequences. The sequence is that of Ribonuclease E/G-like protein (rne) from Pyropia yezoensis (Susabi-nori).